The following is a 332-amino-acid chain: L-lactate dehydrogenase A chain (332 aa).

Position 2 is an N-acetylalanine (alanine 2). Lysine 5 carries the N6-acetyllysine; alternate modification. Lysine 5 carries the N6-succinyllysine; alternate modification. Lysine 14 bears the N6-acetyllysine mark. At threonine 18 the chain carries Phosphothreonine. An NAD(+)-binding site is contributed by 29 to 57; sequence GAVGMACAISILMKDLADELALVDVIEDK. At lysine 57 the chain carries N6-acetyllysine; alternate. Lysine 57 is covalently cross-linked (Glycyl lysine isopeptide (Lys-Gly) (interchain with G-Cter in SUMO2); alternate). Lysine 81 carries the N6-acetyllysine modification. Arginine 99 is a binding site for NAD(+). Arginine 106 is a binding site for substrate. An N6-acetyllysine; alternate modification is found at lysine 118. Position 118 is an N6-succinyllysine; alternate (lysine 118). Lysine 126 carries the N6-acetyllysine modification. An NAD(+)-binding site is contributed by asparagine 138. Substrate-binding residues include asparagine 138 and arginine 169. Catalysis depends on histidine 193, which acts as the Proton acceptor. An N6-acetyllysine mark is found at lysine 224 and lysine 232. Position 239 is a phosphotyrosine (tyrosine 239). Lysine 243 is subject to N6-acetyllysine. Substrate is bound at residue threonine 248. Threonine 309 bears the Phosphothreonine mark. Residue lysine 318 is modified to N6-acetyllysine; alternate. Position 318 is an N6-succinyllysine; alternate (lysine 318). Threonine 322 is subject to Phosphothreonine.

Belongs to the LDH/MDH superfamily. LDH family. Homotetramer. Interacts with PTEN upstream reading frame protein MP31. In terms of processing, ISGylated.

The protein localises to the cytoplasm. The catalysed reaction is (S)-lactate + NAD(+) = pyruvate + NADH + H(+). Its pathway is fermentation; pyruvate fermentation to lactate; (S)-lactate from pyruvate: step 1/1. Functionally, interconverts simultaneously and stereospecifically pyruvate and lactate with concomitant interconversion of NADH and NAD(+). The sequence is that of L-lactate dehydrogenase A chain (LDHA) from Macaca fascicularis (Crab-eating macaque).